Here is a 289-residue protein sequence, read N- to C-terminus: ATP synthase gamma chain (289 aa).

This sequence belongs to the ATPase gamma chain family. F-type ATPases have 2 components, CF(1) - the catalytic core - and CF(0) - the membrane proton channel. CF(1) has five subunits: alpha(3), beta(3), gamma(1), delta(1), epsilon(1). CF(0) has three main subunits: a, b and c.

It localises to the cell inner membrane. Its function is as follows. Produces ATP from ADP in the presence of a proton gradient across the membrane. The gamma chain is believed to be important in regulating ATPase activity and the flow of protons through the CF(0) complex. This is ATP synthase gamma chain from Haemophilus influenzae (strain 86-028NP).